The primary structure comprises 230 residues: N-(5'-phosphoribosyl)anthranilate isomerase (230 aa).

It belongs to the TrpF family.

The catalysed reaction is N-(5-phospho-beta-D-ribosyl)anthranilate = 1-(2-carboxyphenylamino)-1-deoxy-D-ribulose 5-phosphate. The protein operates within amino-acid biosynthesis; L-tryptophan biosynthesis; L-tryptophan from chorismate: step 3/5. The polypeptide is N-(5'-phosphoribosyl)anthranilate isomerase (Trichodesmium erythraeum (strain IMS101)).